A 203-amino-acid polypeptide reads, in one-letter code: Tegument protein UL51 homolog (203 aa).

A lipid anchor (S-palmitoyl cysteine; by host) is attached at Cys4.

It belongs to the herpesviridae UL51 family. Oligomerizes. Interacts with U75; this interaction mediates U75 incorporation to virions. Post-translationally, phosphorylated. In terms of processing, palmitoylation is necessary for Golgi localization.

The protein resides in the virion tegument. It is found in the host cytoplasm. Its subcellular location is the host Golgi apparatus. Plays several roles during the time course of infection, including egress of virus particles from the perinuclear space and secondary envelopment of cytoplasmic capsids that bud into specific trans-Golgi network (TGN)-derived membranes. The polypeptide is Tegument protein UL51 homolog (U44) (Homo sapiens (Human)).